The chain runs to 262 residues: tRNA pseudouridine synthase A (262 aa).

The active-site Nucleophile is D51. Y109 provides a ligand contact to substrate.

This sequence belongs to the tRNA pseudouridine synthase TruA family. Homodimer.

It catalyses the reaction uridine(38/39/40) in tRNA = pseudouridine(38/39/40) in tRNA. Formation of pseudouridine at positions 38, 39 and 40 in the anticodon stem and loop of transfer RNAs. The polypeptide is tRNA pseudouridine synthase A (Dechloromonas aromatica (strain RCB)).